A 353-amino-acid polypeptide reads, in one-letter code: MTAILERRDSENLWGRFCNWITTTENRLYIGWFGVLMIPTLLTATSVFIIAFIAAPPVDIDGIREPVSGSLLYGNNIISGAIIPTSAVIGLHFYPIWEAASVDEWLYNGGPYELIVLHFLLGVACYMGREWELSFRLGMRPWIVVAYSAPVAAATAVFLIYPIGQGSFSDGMPLGISGTFNFMIVFQAEHNILMHPFHMLGVAGVFGGSLFSAMHGSLVTSSLIRETTENESANEGYRFGQEEETYNIVAAHGYFGRLIFQYASFNNSRSLHFFLAAWPVVGIWFTALGISTMAFNLNGFNFNQSVVDSQGRVINTWADIINRANLGMEVMHERNAHNFPLDLAAVDAPSISG.

Thr2 is modified (N-acetylthreonine). At Thr2 the chain carries Phosphothreonine. The next 3 membrane-spanning stretches (helical) occupy residues Tyr29 to Ser46, His118 to Leu133, and Trp142 to Ala156. Chlorophyll a is bound at residue His118. Tyr126 is a binding site for pheophytin a. [CaMn4O5] cluster-binding residues include Asp170 and Glu189. A helical membrane pass occupies residues Phe197–Leu218. Residue His198 participates in chlorophyll a binding. A quinone contacts are provided by residues His215 and Ser264–Phe265. Position 215 (His215) interacts with Fe cation. His272 is a Fe cation binding site. The chain crosses the membrane as a helical span at residues Phe274–Leu288. [CaMn4O5] cluster-binding residues include His332, Glu333, Asp342, and Ala344. The propeptide occupies Ala345–Gly353.

This sequence belongs to the reaction center PufL/M/PsbA/D family. As to quaternary structure, PSII is composed of 1 copy each of membrane proteins PsbA, PsbB, PsbC, PsbD, PsbE, PsbF, PsbH, PsbI, PsbJ, PsbK, PsbL, PsbM, PsbT, PsbX, PsbY, PsbZ, Psb30/Ycf12, at least 3 peripheral proteins of the oxygen-evolving complex and a large number of cofactors. It forms dimeric complexes. Requires The D1/D2 heterodimer binds P680, chlorophylls that are the primary electron donor of PSII, and subsequent electron acceptors. It shares a non-heme iron and each subunit binds pheophytin, quinone, additional chlorophylls, carotenoids and lipids. D1 provides most of the ligands for the Mn4-Ca-O5 cluster of the oxygen-evolving complex (OEC). There is also a Cl(-1) ion associated with D1 and D2, which is required for oxygen evolution. The PSII complex binds additional chlorophylls, carotenoids and specific lipids. as cofactor. Post-translationally, tyr-161 forms a radical intermediate that is referred to as redox-active TyrZ, YZ or Y-Z. C-terminally processed by CTPA; processing is essential to allow assembly of the oxygen-evolving complex and thus photosynthetic growth.

Its subcellular location is the plastid. The protein resides in the chloroplast thylakoid membrane. It carries out the reaction 2 a plastoquinone + 4 hnu + 2 H2O = 2 a plastoquinol + O2. Its function is as follows. Photosystem II (PSII) is a light-driven water:plastoquinone oxidoreductase that uses light energy to abstract electrons from H(2)O, generating O(2) and a proton gradient subsequently used for ATP formation. It consists of a core antenna complex that captures photons, and an electron transfer chain that converts photonic excitation into a charge separation. The D1/D2 (PsbA/PsbD) reaction center heterodimer binds P680, the primary electron donor of PSII as well as several subsequent electron acceptors. This chain is Photosystem II protein D1, found in Vicia faba (Broad bean).